Reading from the N-terminus, the 239-residue chain is EF-hand domain-containing protein D1 (239 aa).

Over residues 1-18 (MASEELACKLERRLRREE) the composition is skewed to basic and acidic residues. Residues 1 to 53 (MASEELACKLERRLRREEAEESGPQLAPLGAPAPEPKPEPEPPARAPTASADA) are disordered. EF-hand domains are found at residues 90-125 (RLIK…LGAP) and 126-161 (QTHL…AAAG). Positions 103, 107, 114, 139, 141, 143, 145, and 150 each coordinate Ca(2+). Residue Ser-201 is modified to Phosphoserine.

The protein resides in the mitochondrion inner membrane. In terms of biological role, acts as a calcium sensor for mitochondrial flash (mitoflash) activation, an event characterized by stochastic bursts of superoxide production. May play a role in neuronal differentiation. The chain is EF-hand domain-containing protein D1 (EFHD1) from Homo sapiens (Human).